The chain runs to 284 residues: Pseudouridine-5'-phosphate glycosidase (284 aa).

The active-site Proton donor is E8. K69 and V89 together coordinate substrate. Mn(2+) is bound at residue D119. 121–123 is a substrate binding site; the sequence is SQD. Residue K140 is the Nucleophile of the active site.

It belongs to the pseudouridine-5'-phosphate glycosidase family. In terms of assembly, homotrimer. Requires Mn(2+) as cofactor.

It catalyses the reaction D-ribose 5-phosphate + uracil = psi-UMP + H2O. Catalyzes the reversible cleavage of pseudouridine 5'-phosphate (PsiMP) to ribose 5-phosphate and uracil. Functions biologically in the cleavage direction, as part of a pseudouridine degradation pathway. This Pseudothermotoga lettingae (strain ATCC BAA-301 / DSM 14385 / NBRC 107922 / TMO) (Thermotoga lettingae) protein is Pseudouridine-5'-phosphate glycosidase.